The primary structure comprises 520 residues: Peptidoglycan-recognition protein LC (520 aa).

Composition is skewed to polar residues over residues methionine 1–asparagine 14 and lysine 27–serine 36. 2 disordered regions span residues methionine 1–valine 78 and aspartate 239–proline 278. The Cytoplasmic segment spans residues methionine 1–lysine 291. Basic and acidic residues-rich tracts occupy residues arginine 48–threonine 58 and lysine 66–valine 78. A helical; Signal-anchor for type II membrane protein transmembrane segment spans residues alanine 292 to threonine 312. Topologically, residues threonine 313 to serine 520 are extracellular. N-linked (GlcNAc...) asparagine glycosylation is present at asparagine 389. The cysteines at positions 390 and 396 are disulfide-linked. In terms of domain architecture, N-acetylmuramoyl-L-alanine amidase spans glutamine 412 to arginine 490. The N-linked (GlcNAc...) asparagine glycan is linked to asparagine 515.

The protein belongs to the N-acetylmuramoyl-L-alanine amidase 2 family. Post-translationally, proteolytically cleaved, probably by a metaloprotease such as Mmp2; proteolytic cleavage leads to activation of the imd/Relish signaling pathway. In terms of tissue distribution, expressed in the fat body and hemocytes.

The protein localises to the membrane. With respect to regulation, activated by proteolytic cleavage in response to Gram-negative bacterial infection; cleavage may be mediated by endogenous proteases, such as the metalloprotease Mmp2 or elastase, or by bacterially expressed proteases such as the surface serine protease OmpT. Major activator of the imd/Relish pathway and is likely to encode a pattern recognition molecule for the humoral immune response. Required for Relish processing and nuclear translocation following proteolytic cleavage. Involved in the response to lipopolysaccharide (LPS) and peptidoglycan of Gram-negative bacteria. The different isoforms probably display different recognition capabilities to various microbial patterns. Functionally, mediates the response to LPS and Gram-negative bacteria. In terms of biological role, mediates the response to LPS, peptidoglycan and Gram-negative bacteria. In Drosophila melanogaster (Fruit fly), this protein is Peptidoglycan-recognition protein LC (PGRP-LC).